The primary structure comprises 214 residues: UPF0502 protein Spro_2794 (214 aa).

This sequence belongs to the UPF0502 family.

The polypeptide is UPF0502 protein Spro_2794 (Serratia proteamaculans (strain 568)).